Here is a 375-residue protein sequence, read N- to C-terminus: 23S rRNA (uracil(747)-C(5))-methyltransferase RlmC (375 aa).

[4Fe-4S] cluster is bound by residues Cys-3, Cys-11, Cys-14, and Cys-87. S-adenosyl-L-methionine-binding residues include Gln-212, Phe-241, Glu-262, and Asn-307. Residue Cys-334 is the Nucleophile of the active site.

The protein belongs to the class I-like SAM-binding methyltransferase superfamily. RNA M5U methyltransferase family. RlmC subfamily.

It catalyses the reaction uridine(747) in 23S rRNA + S-adenosyl-L-methionine = 5-methyluridine(747) in 23S rRNA + S-adenosyl-L-homocysteine + H(+). In terms of biological role, catalyzes the formation of 5-methyl-uridine at position 747 (m5U747) in 23S rRNA. The sequence is that of 23S rRNA (uracil(747)-C(5))-methyltransferase RlmC from Escherichia coli (strain SMS-3-5 / SECEC).